The primary structure comprises 195 residues: UPF0215 protein TSIB_1161 (195 aa).

Belongs to the UPF0215 family.

This chain is UPF0215 protein TSIB_1161, found in Thermococcus sibiricus (strain DSM 12597 / MM 739).